A 101-amino-acid chain; its full sequence is NAD(P)H-quinone oxidoreductase subunit 4L, chloroplastic (101 aa).

Transmembrane regions (helical) follow at residues 2-22 (ILEH…YGLI), 32-52 (MCLE…SDFF), and 61-81 (IFSI…LAIV).

Belongs to the complex I subunit 4L family. In terms of assembly, NDH is composed of at least 16 different subunits, 5 of which are encoded in the nucleus.

It is found in the plastid. Its subcellular location is the chloroplast thylakoid membrane. It catalyses the reaction a plastoquinone + NADH + (n+1) H(+)(in) = a plastoquinol + NAD(+) + n H(+)(out). The catalysed reaction is a plastoquinone + NADPH + (n+1) H(+)(in) = a plastoquinol + NADP(+) + n H(+)(out). In terms of biological role, NDH shuttles electrons from NAD(P)H:plastoquinone, via FMN and iron-sulfur (Fe-S) centers, to quinones in the photosynthetic chain and possibly in a chloroplast respiratory chain. The immediate electron acceptor for the enzyme in this species is believed to be plastoquinone. Couples the redox reaction to proton translocation, and thus conserves the redox energy in a proton gradient. This chain is NAD(P)H-quinone oxidoreductase subunit 4L, chloroplastic, found in Oenothera argillicola (Appalachian evening primrose).